The following is a 619-amino-acid chain: Probable Xaa-Pro aminopeptidase P (619 aa).

Positions 416, 427, 525, and 539 each coordinate Mn(2+).

It belongs to the peptidase M24B family. It depends on Mn(2+) as a cofactor.

The enzyme catalyses Release of any N-terminal amino acid, including proline, that is linked to proline, even from a dipeptide or tripeptide.. In terms of biological role, catalyzes the removal of a penultimate prolyl residue from the N-termini of peptides. This Tuber melanosporum (strain Mel28) (Perigord black truffle) protein is Probable Xaa-Pro aminopeptidase P (AMPP).